The sequence spans 619 residues: Chaperone protein HscA homolog (619 aa).

This sequence belongs to the heat shock protein 70 family.

In terms of biological role, chaperone involved in the maturation of iron-sulfur cluster-containing proteins. Has a low intrinsic ATPase activity which is markedly stimulated by HscB. This chain is Chaperone protein HscA homolog, found in Acinetobacter baumannii (strain ACICU).